We begin with the raw amino-acid sequence, 418 residues long: Ciliary microtubule-associated protein 2 (418 aa).

In terms of tissue distribution, sperm.

In Homo sapiens (Human), this protein is Ciliary microtubule-associated protein 2.